The chain runs to 276 residues: 4-chlorobenzoyl coenzyme A dehalogenase-2 (276 aa).

66–71 (AGFDLE) is a substrate binding site. His-93 (proton acceptor) is an active-site residue. Gly-117 provides a ligand contact to substrate. Asp-148 functions as the Nucleophile in the catalytic mechanism. Arg-261 is a binding site for substrate.

It belongs to the enoyl-CoA hydratase/isomerase family. Homotetramer.

The catalysed reaction is 4-chlorobenzoyl-CoA + H2O = 4-hydroxybenzoyl-CoA + chloride + H(+). Its pathway is xenobiotic degradation; 4-chlorobenzoate degradation; 4-hydroxybenzoate from 4-chlorobenzoate: step 2/3. Its function is as follows. Dehalogenates 4-chlorobenzoyl-CoA, 4-iodobenzoyl-CoA, 4-bromobenzoyl-CoA and, at a slower rate, 4-fluorobenzoyl-CoA. Does not dehalogenate 2-chlorobenzoyl-CoA or 3-chlorobenzoyl-CoA. This Arthrobacter sp protein is 4-chlorobenzoyl coenzyme A dehalogenase-2.